The chain runs to 276 residues: Short-chain dehydrogenase anuF (276 aa).

I18, D68, K130, Y176, K180, V209, and T211 together coordinate NADP(+). The Proton acceptor role is filled by Y176. The active-site Proton donor is Y176. K180 functions as the Lowers pKa of active site Tyr in the catalytic mechanism.

The protein belongs to the short-chain dehydrogenases/reductases (SDR) family.

It catalyses the reaction (2R,9S)-annullatin H + A = (2R)-annullatin F + AH2. Cytochrome P450 monooxygenase; part of the gene cluster that mediates the biosynthesis of annullatin D, an alkylated aromatic polyketide with a fused dihydrobenzofuran lactone ring system that exhibits potent agonistic activities toward the cannabinoid receptors. Within the pathway, anuF is involved in the formation of (2R)-annullatin F from the diastereomer of (2S,9S)-annullatin H (compound 12). The annullatin backbone 2-hydroxymethyl-3-pentylphenol is assembled from one acetyl-CoA starter unit and 5 malonyl-CoA elongation units by cooperation of the highly reducing polyketide synthase anuA, the short-chain dehydrogenase anuB and the oxidoreductase anuC, before being hydroxylated at the C-5 alkyl chain by the cytochrome P450 monooxygenase anuE to form (8S)-annullatin E. The prenyltransferase anuH subsequently installs one isoprenyl group at the benzene ring to form (8S)-annullatin J. Enzymatic or nonenzymatic dihydro-benzofuran ring formation between the prenyl and the phenolic hydroxyl groups in (8S)-annullatin J results in two diastereomers (2S,9S)-annullatin H and compound 12. The intermediate (2S,9S)-annullatin H is then converted to (2S,9S)-annullatin D by the FAD-linked oxidoreductase anuG-catalyzed five-member lactone ring formation. The isomer 12 acts as a substrate for the short-chain dehydrogenase anuF and is oxidized to (2R)-annullatin F, which is subsequently acetylated by an acetyltransferase leading to (2R)-annullatin G formation. The remaining enzymes identified within the cluster, anuD, anuI and anuJ, seem not to be involved in annullatin biosynthesis. This Penicillium roqueforti (strain FM164) protein is Short-chain dehydrogenase anuF.